The sequence spans 182 residues: Thioredoxin F-type, chloroplastic (182 aa).

A chloroplast-targeting transit peptide spans 1–69 (MALNLCTSPK…SVRSSLETAG (69 aa)). A Thioredoxin domain is found at 70–181 (PTVTVGKVTE…LVAAIDTVRS (112 aa)). Catalysis depends on nucleophile residues Cys-106 and Cys-109. Cysteines 106 and 109 form a disulfide.

The protein belongs to the thioredoxin family. Plant F-type subfamily. In terms of assembly, forms a complex with heterodimeric ferredoxin-thioredoxin reductase (FTR) and ferredoxin.

The protein localises to the plastid. It localises to the chloroplast. In terms of biological role, participates in various redox reactions through the reversible oxidation of the active center dithiol to a disulfide. The F form is known to activate a number of enzymes of the photosynthetic carbon cycle. This chain is Thioredoxin F-type, chloroplastic, found in Pisum sativum (Garden pea).